A 369-amino-acid polypeptide reads, in one-letter code: Cyclic AMP receptor-like protein A (369 aa).

At 1 to 4 (MIQI) the chain is on the extracellular side. A helical membrane pass occupies residues 5-22 (LLSTFISFIIIIVSSNDI). At 23–72 (RSGENDNFNNNKMINNFLTTITTNDTIIIKETESPNDYDFSKEQIESLDK) the chain is on the cytoplasmic side. The chain crosses the membrane as a helical span at residues 73 to 93 (IVYFSSTMGIVGALFIIVSFF). The Extracellular portion of the chain corresponds to 94-100 (LFKAART). Residues 101 to 121 (FATKMIFFLSLSDLFAAIFYL) form a helical membrane-spanning segment. Residues 122–146 (PYYRDSDIMCNLQGMGLVFFLSSSY) are Cytoplasmic-facing. A helical membrane pass occupies residues 147–167 (LWTMCISISLFMVFFTTIFEL). Residues 168 to 173 (NHWFKY) lie on the Extracellular side of the membrane. The helical transmembrane segment at 174-194 (FHFICWGIPLFTAIISLIFHA) threads the bilayer. Over 195–212 (YGKTGSWCFISDPTSIFR) the chain is Cytoplasmic. Residues 213 to 233 (LLYYLPLIVVFFINLVVFIAI) form a helical membrane-spanning segment. At 234-247 (RWKISQHSNSLVSR) the chain is on the extracellular side. Residues 248–268 (VNIIVSFYLIAFSLSQLPTII) form a helical membrane-spanning segment. At 269 to 369 (NSIQNFSDPD…KLIIDDYNRV (101 aa)) the chain is on the cytoplasmic side.

The protein belongs to the G-protein coupled receptor 5 family.

It is found in the membrane. Its function is as follows. Receptor for cAMP which may play a role in prestalk cell differentiation. May act as a negative regulator of cell growth. This chain is Cyclic AMP receptor-like protein A (crlA), found in Dictyostelium discoideum (Social amoeba).